We begin with the raw amino-acid sequence, 214 residues long: Thioredoxin-like 4, chloroplastic (214 aa).

Residues methionine 1–serine 20 show a composition bias toward low complexity. The segment at methionine 1–proline 68 is disordered. The transit peptide at methionine 1–valine 71 directs the protein to the chloroplast. A compositionally biased stretch (pro residues) spans leucine 21–proline 34. Low complexity predominate over residues serine 42–serine 53. In terms of domain architecture, Thioredoxin spans valine 72–alanine 199. Active-site nucleophile residues include cysteine 117 and cysteine 120. A disulfide bridge links cysteine 117 with cysteine 120.

It belongs to the thioredoxin family.

It is found in the plastid. The protein resides in the chloroplast. Its function is as follows. Probable thiol-disulfide oxidoreductase that may participate in various redox reactions. In Oryza sativa subsp. japonica (Rice), this protein is Thioredoxin-like 4, chloroplastic.